A 638-amino-acid polypeptide reads, in one-letter code: Actin-regulating kinase 1 (638 aa).

The Protein kinase domain maps to valine 22 to isoleucine 298. ATP contacts are provided by residues leucine 28–valine 36 and lysine 56. Aspartate 159 acts as the Proton acceptor in catalysis. Serine 478 carries the phosphoserine modification. Over residues tyrosine 482 to valine 515 the composition is skewed to polar residues. Residues tyrosine 482–lysine 518 are disordered. Serine 522 and serine 535 each carry phosphoserine. The tract at residues serine 569–lysine 638 is disordered. The segment covering lysine 582–threonine 593 has biased composition (basic and acidic residues). Positions serine 602–proline 615 are interaction with SH3 domain of ABP1.

This sequence belongs to the protein kinase superfamily. Ser/Thr protein kinase family. As to quaternary structure, interacts with ABP1, which is required for proper actin patch localization.

The protein localises to the cytoplasm. Its subcellular location is the cytoskeleton. The protein resides in the actin patch. It catalyses the reaction L-seryl-[protein] + ATP = O-phospho-L-seryl-[protein] + ADP + H(+). The enzyme catalyses L-threonyl-[protein] + ATP = O-phospho-L-threonyl-[protein] + ADP + H(+). Involved in regulation of actin cytoskeleton organization and endocytosis. The polypeptide is Actin-regulating kinase 1 (ARK1) (Saccharomyces cerevisiae (strain ATCC 204508 / S288c) (Baker's yeast)).